The following is a 431-amino-acid chain: Cleavage stimulation factor subunit 1 (431 aa).

WD repeat units follow at residues 106–145, 171–210, 215–254, 260–301, 303–343, and 395–431; these read SHKGPCRVATYSRDGQLIATGSADASIKILDTERMLAKSA, DHVDEVTCLAFHPTEQILASGSRDYTLKLFDYSKPSAKRA, QEAEMLRSISFHPSGDFILVGTQHPTLRLYDINTFQCFVS, QHTD…TTFE, AHDG…TLVR, and GHNNIVRCIVHSPTNPGFMTCSDDFRARFWYRRSTTD.

Homodimer. The CSTF complex is composed of CSTF1 (50 kDa subunit), CSTF2 (64 kDa subunit) and CSTF3 (77 kDa subunit). Interacts (via repeats WD) directly with CSTF3. Interacts (via repeat WD6) with BARD1. Interacts with ERCC6.

Its subcellular location is the nucleus. One of the multiple factors required for polyadenylation and 3'-end cleavage of mammalian pre-mRNAs. May be responsible for the interaction of CSTF with other factors to form a stable complex on the pre-mRNA. This chain is Cleavage stimulation factor subunit 1 (Cstf1), found in Mus musculus (Mouse).